Reading from the N-terminus, the 567-residue chain is Potassium-transporting ATPase potassium-binding subunit (567 aa).

Helical transmembrane passes span 11 to 31 (LYLL…AALL), 67 to 87 (AAAI…LQRW), 136 to 156 (GLAV…VALV), 179 to 199 (LWLL…QGVV), 255 to 275 (FSNW…VVMF), 286 to 306 (VVLL…VYLA), 333 to 353 (FGVL…CGAV), 363 to 383 (LGGG…GGVG), 385 to 405 (GLYG…LMIG), 422 to 442 (LVSV…AIAV), 489 to 509 (LMLA…VLAL), and 532 to 552 (LFVV…YIPA).

It belongs to the KdpA family. In terms of assembly, the system is composed of three essential subunits: KdpA, KdpB and KdpC.

The protein resides in the cell inner membrane. In terms of biological role, part of the high-affinity ATP-driven potassium transport (or Kdp) system, which catalyzes the hydrolysis of ATP coupled with the electrogenic transport of potassium into the cytoplasm. This subunit binds the periplasmic potassium ions and delivers the ions to the membrane domain of KdpB through an intramembrane tunnel. In Laribacter hongkongensis (strain HLHK9), this protein is Potassium-transporting ATPase potassium-binding subunit.